The sequence spans 506 residues: Glutamate--tRNA ligase (506 aa).

The 'HIGH' region motif lies at 24–34; the sequence is PSPTGLQHIGG. 4 residues coordinate Zn(2+): Cys-121, Cys-123, Cys-148, and His-150. Positions 266–270 match the 'KMSKS' region motif; that stretch reads KLSKR. An ATP-binding site is contributed by Lys-269.

The protein belongs to the class-I aminoacyl-tRNA synthetase family. Glutamate--tRNA ligase type 1 subfamily. In terms of assembly, monomer. Requires Zn(2+) as cofactor.

Its subcellular location is the cytoplasm. It catalyses the reaction tRNA(Glu) + L-glutamate + ATP = L-glutamyl-tRNA(Glu) + AMP + diphosphate. Functionally, catalyzes the attachment of glutamate to tRNA(Glu) in a two-step reaction: glutamate is first activated by ATP to form Glu-AMP and then transferred to the acceptor end of tRNA(Glu). The protein is Glutamate--tRNA ligase of Borrelia duttonii (strain Ly).